A 331-amino-acid polypeptide reads, in one-letter code: Glyceraldehyde-3-phosphate dehydrogenase, cytosolic (331 aa).

NAD(+) contacts are provided by residues 12-13, aspartate 34, and arginine 78; that span reads RI. D-glyceraldehyde 3-phosphate-binding positions include 149–151, threonine 180, 209–210, and arginine 232; these read SCT and TG. Cysteine 150 (nucleophile) is an active-site residue. Residue asparagine 314 coordinates NAD(+).

Belongs to the glyceraldehyde-3-phosphate dehydrogenase family. Homotetramer.

It localises to the cytoplasm. It catalyses the reaction D-glyceraldehyde 3-phosphate + phosphate + NAD(+) = (2R)-3-phospho-glyceroyl phosphate + NADH + H(+). The protein operates within carbohydrate degradation; glycolysis; pyruvate from D-glyceraldehyde 3-phosphate: step 1/5. The protein is Glyceraldehyde-3-phosphate dehydrogenase, cytosolic of Trypanosoma brucei brucei.